The following is a 365-amino-acid chain: DNA polymerase IV (365 aa).

The region spanning 14–198 is the UmuC domain; the sequence is IIHIDMDAFF…LPIEKFHGVG (185 aa). Mg(2+) is bound by residues aspartate 18 and aspartate 116. Residue glutamate 117 is part of the active site.

Belongs to the DNA polymerase type-Y family. In terms of assembly, monomer. Requires Mg(2+) as cofactor.

It localises to the cytoplasm. It catalyses the reaction DNA(n) + a 2'-deoxyribonucleoside 5'-triphosphate = DNA(n+1) + diphosphate. Functionally, poorly processive, error-prone DNA polymerase involved in untargeted mutagenesis. Copies undamaged DNA at stalled replication forks, which arise in vivo from mismatched or misaligned primer ends. These misaligned primers can be extended by PolIV. Exhibits no 3'-5' exonuclease (proofreading) activity. May be involved in translesional synthesis, in conjunction with the beta clamp from PolIII. In Streptococcus pyogenes serotype M3 (strain ATCC BAA-595 / MGAS315), this protein is DNA polymerase IV.